We begin with the raw amino-acid sequence, 65 residues long: UPF0434 protein BQ10150 (65 aa).

Belongs to the UPF0434 family.

This Bartonella quintana (strain Toulouse) (Rochalimaea quintana) protein is UPF0434 protein BQ10150.